Reading from the N-terminus, the 138-residue chain is MATRTQARGAVIELLYAFESGNEEIKKIAPSMLEEKKIKNNQLAFALSLFNGVLEKINEIDALIEPHLKDWDFKRLGSMEKAILRLGAYEIGFTPTQNPIIINECIELGKLYAEPNTPKFLNAILDSLSKKLAQKPLT.

Belongs to the NusB family.

Functionally, involved in transcription antitermination. Required for transcription of ribosomal RNA (rRNA) genes. Binds specifically to the boxA antiterminator sequence of the ribosomal RNA (rrn) operons. The protein is Transcription antitermination protein NusB of Helicobacter acinonychis (strain Sheeba).